Consider the following 64-residue polypeptide: Large ribosomal subunit protein uL30 (64 aa).

It belongs to the universal ribosomal protein uL30 family. As to quaternary structure, part of the 50S ribosomal subunit.

In Desulforudis audaxviator (strain MP104C), this protein is Large ribosomal subunit protein uL30.